A 380-amino-acid chain; its full sequence is Flap endonuclease 1 (380 aa).

Residues 1–104 (MGIQGLAKLI…GELAKRSERR (104 aa)) form an N-domain region. The residue at position 19 (R19) is a Symmetric dimethylarginine; by PRMT5. D34 contacts Mg(2+). Residues R47 and R70 each contribute to the DNA site. Position 80 is an N6-acetyllysine (K80). D86 is a binding site for Mg(2+). Symmetric dimethylarginine; by PRMT5 occurs at positions 100 and 104. The interval 122-253 (EVEKFTKRLV…KRAVDLIQKH (132 aa)) is I-domain. 4 residues coordinate Mg(2+): E158, E160, D179, and D181. Residue E158 participates in DNA binding. S187 bears the Phosphoserine; by CDK2 mark. Residue R192 is modified to Symmetric dimethylarginine; by PRMT5. S197 bears the Phosphoserine mark. DNA contacts are provided by G231 and D233. D233 contacts Mg(2+). Phosphoserine is present on residues S255, S293, and S335. Residue T336 is modified to Phosphothreonine. The interval 336–344 (TQGRLDDFF) is interaction with PCNA. The disordered stretch occupies residues 349–380 (SLSSAKRKEPEPKGAAKKKQRLGPAGKFKRGK). N6-acetyllysine is present on residues K354, K375, K377, and K380. Positions 363–380 (AAKKKQRLGPAGKFKRGK) are enriched in basic residues.

This sequence belongs to the XPG/RAD2 endonuclease family. FEN1 subfamily. As to quaternary structure, interacts with PCNA. Three molecules of FEN1 bind to one PCNA trimer with each molecule binding to one PCNA monomer. PCNA stimulates the nuclease activity without altering cleavage specificity. The C-terminal domain binds EP300; can bind simultaneously to both PCNA and EP300. Interacts with DDX11; this interaction is direct and increases flap endonuclease activity of FEN1. Interacts with WDR4; regulating its endonuclease activity. Interacts with POLB. Mg(2+) serves as cofactor. Post-translationally, acetylated by EP300. Acetylation inhibits both endonuclease and exonuclease activity. Acetylation also reduces DNA-binding activity but does not affect interaction with PCNA or EP300. In terms of processing, phosphorylation upon DNA damage induces relocalization to the nuclear plasma. Phosphorylation at Ser-187 by CDK2 occurs during late S-phase and results in dissociation from PCNA. Methylation at Arg-192 by PRMT5 impedes Ser-187 phosphorylation and increases interaction with PCNA.

It is found in the nucleus. It localises to the nucleolus. The protein resides in the nucleoplasm. Its subcellular location is the mitochondrion. Its function is as follows. Structure-specific nuclease with 5'-flap endonuclease and 5'-3' exonuclease activities involved in DNA replication and repair. During DNA replication, cleaves the 5'-overhanging flap structure that is generated by displacement synthesis when DNA polymerase encounters the 5'-end of a downstream Okazaki fragment. It enters the flap from the 5'-end and then tracks to cleave the flap base, leaving a nick for ligation. Also involved in the long patch base excision repair (LP-BER) pathway, by cleaving within the apurinic/apyrimidinic (AP) site-terminated flap. Acts as a genome stabilization factor that prevents flaps from equilibrating into structures that lead to duplications and deletions. Also possesses 5'-3' exonuclease activity on nicked or gapped double-stranded DNA, and exhibits RNase H activity. Also involved in replication and repair of rDNA and in repairing mitochondrial DNA. The polypeptide is Flap endonuclease 1 (Ovis aries (Sheep)).